Consider the following 327-residue polypeptide: ATP-dependent 6-phosphofructokinase (327 aa).

ATP contacts are provided by residues glycine 11, 72-73 (RS), and 102-105 (GDGS). Aspartate 103 is a Mg(2+) binding site. 127-129 (TID) contacts substrate. Aspartate 129 (proton acceptor) is an active-site residue. Arginine 156 provides a ligand contact to ADP. Residues arginine 164 and 171–173 (MGR) each bind substrate. 187–189 (GAE) contacts ADP. Residues glutamate 224, arginine 245, and 251–254 (HIQR) contribute to the substrate site.

The protein belongs to the phosphofructokinase type A (PFKA) family. ATP-dependent PFK group I subfamily. Prokaryotic clade 'B1' sub-subfamily. As to quaternary structure, homotetramer. Requires Mg(2+) as cofactor.

Its subcellular location is the cytoplasm. The catalysed reaction is beta-D-fructose 6-phosphate + ATP = beta-D-fructose 1,6-bisphosphate + ADP + H(+). The protein operates within carbohydrate degradation; glycolysis; D-glyceraldehyde 3-phosphate and glycerone phosphate from D-glucose: step 3/4. Allosterically activated by ADP and other diphosphonucleosides, and allosterically inhibited by phosphoenolpyruvate. Catalyzes the phosphorylation of D-fructose 6-phosphate to fructose 1,6-bisphosphate by ATP, the first committing step of glycolysis. The sequence is that of ATP-dependent 6-phosphofructokinase from Sulfurovum sp. (strain NBC37-1).